The following is a 479-amino-acid chain: Aspartyl/glutamyl-tRNA(Asn/Gln) amidotransferase subunit B (479 aa).

This sequence belongs to the GatB/GatE family. GatB subfamily. As to quaternary structure, heterotrimer of A, B and C subunits.

The enzyme catalyses L-glutamyl-tRNA(Gln) + L-glutamine + ATP + H2O = L-glutaminyl-tRNA(Gln) + L-glutamate + ADP + phosphate + H(+). It carries out the reaction L-aspartyl-tRNA(Asn) + L-glutamine + ATP + H2O = L-asparaginyl-tRNA(Asn) + L-glutamate + ADP + phosphate + 2 H(+). Functionally, allows the formation of correctly charged Asn-tRNA(Asn) or Gln-tRNA(Gln) through the transamidation of misacylated Asp-tRNA(Asn) or Glu-tRNA(Gln) in organisms which lack either or both of asparaginyl-tRNA or glutaminyl-tRNA synthetases. The reaction takes place in the presence of glutamine and ATP through an activated phospho-Asp-tRNA(Asn) or phospho-Glu-tRNA(Gln). In Streptococcus uberis (strain ATCC BAA-854 / 0140J), this protein is Aspartyl/glutamyl-tRNA(Asn/Gln) amidotransferase subunit B.